The following is a 284-amino-acid chain: 3-methyl-2-oxobutanoate hydroxymethyltransferase 2 (284 aa).

Mg(2+) is bound by residues aspartate 49 and aspartate 88. 3-methyl-2-oxobutanoate-binding positions include 49-50 (DS), aspartate 88, and lysine 118. Position 120 (glutamate 120) interacts with Mg(2+). Catalysis depends on glutamate 187, which acts as the Proton acceptor.

Belongs to the PanB family. Homodecamer; pentamer of dimers. Mg(2+) is required as a cofactor.

It is found in the cytoplasm. It carries out the reaction 3-methyl-2-oxobutanoate + (6R)-5,10-methylene-5,6,7,8-tetrahydrofolate + H2O = 2-dehydropantoate + (6S)-5,6,7,8-tetrahydrofolate. Its pathway is cofactor biosynthesis; (R)-pantothenate biosynthesis; (R)-pantoate from 3-methyl-2-oxobutanoate: step 1/2. Functionally, catalyzes the reversible reaction in which hydroxymethyl group from 5,10-methylenetetrahydrofolate is transferred onto alpha-ketoisovalerate to form ketopantoate. The chain is 3-methyl-2-oxobutanoate hydroxymethyltransferase 2 from Burkholderia ambifaria (strain ATCC BAA-244 / DSM 16087 / CCUG 44356 / LMG 19182 / AMMD) (Burkholderia cepacia (strain AMMD)).